A 275-amino-acid chain; its full sequence is Protein FAM210A (275 aa).

Positions Ser-68 to Gln-108 are disordered. Over residues Thr-74 to Pro-84 the composition is skewed to basic and acidic residues. The region spanning Asp-109–Lys-221 is the DUF1279 domain. A helical transmembrane segment spans residues Val-128 to Ala-148. Positions Lys-221–Lys-271 form a coiled coil.

Belongs to the FAM210 family. Interacts with ATAD3A.

The protein resides in the membrane. It localises to the mitochondrion. It is found in the cytoplasm. In terms of biological role, may play a role in the structure and strength of both muscle and bone. The sequence is that of Protein FAM210A (FAM210A) from Gallus gallus (Chicken).